Reading from the N-terminus, the 361-residue chain is Queuine tRNA-ribosyltransferase (361 aa).

The active-site Proton acceptor is the D89. Residues 89 to 93 (DSGGF), D143, Q185, and G212 contribute to the substrate site. An RNA binding region spans residues 243-249 (GVGTPED). D262 functions as the Nucleophile in the catalytic mechanism. The segment at 267–271 (TRNAR) is RNA binding; important for wobble base 34 recognition. Zn(2+) is bound by residues C300, C302, C305, and H331.

The protein belongs to the queuine tRNA-ribosyltransferase family. In terms of assembly, homodimer. Within each dimer, one monomer is responsible for RNA recognition and catalysis, while the other monomer binds to the replacement base PreQ1. It depends on Zn(2+) as a cofactor.

The enzyme catalyses 7-aminomethyl-7-carbaguanine + guanosine(34) in tRNA = 7-aminomethyl-7-carbaguanosine(34) in tRNA + guanine. The protein operates within tRNA modification; tRNA-queuosine biosynthesis. Its function is as follows. Catalyzes the base-exchange of a guanine (G) residue with the queuine precursor 7-aminomethyl-7-deazaguanine (PreQ1) at position 34 (anticodon wobble position) in tRNAs with GU(N) anticodons (tRNA-Asp, -Asn, -His and -Tyr). Catalysis occurs through a double-displacement mechanism. The nucleophile active site attacks the C1' of nucleotide 34 to detach the guanine base from the RNA, forming a covalent enzyme-RNA intermediate. The proton acceptor active site deprotonates the incoming PreQ1, allowing a nucleophilic attack on the C1' of the ribose to form the product. After dissociation, two additional enzymatic reactions on the tRNA convert PreQ1 to queuine (Q), resulting in the hypermodified nucleoside queuosine (7-(((4,5-cis-dihydroxy-2-cyclopenten-1-yl)amino)methyl)-7-deazaguanosine). In Nitrosomonas eutropha (strain DSM 101675 / C91 / Nm57), this protein is Queuine tRNA-ribosyltransferase.